The primary structure comprises 78 residues: Large ribosomal subunit protein bL28 (78 aa).

Belongs to the bacterial ribosomal protein bL28 family.

In Erwinia tasmaniensis (strain DSM 17950 / CFBP 7177 / CIP 109463 / NCPPB 4357 / Et1/99), this protein is Large ribosomal subunit protein bL28.